The chain runs to 885 residues: Leucine--tRNA ligase (885 aa).

The 'HIGH' region signature appears at 48–58 (PYPSGKLHMGH). The 'KMSKS' region motif lies at 639–643 (TMSKS). Residue lysine 642 coordinates ATP.

It belongs to the class-I aminoacyl-tRNA synthetase family.

It is found in the cytoplasm. It catalyses the reaction tRNA(Leu) + L-leucine + ATP = L-leucyl-tRNA(Leu) + AMP + diphosphate. This is Leucine--tRNA ligase from Bordetella pertussis (strain Tohama I / ATCC BAA-589 / NCTC 13251).